The primary structure comprises 292 residues: Peroxisomal 2,4-dienoyl-CoA reductase [(3E)-enoyl-CoA-producing] (292 aa).

An N-acetylalanine modification is found at Ala-2. NADP(+) is bound by residues Gly-35–Ile-40, Arg-60–Lys-64, and Asp-86. Substrate is bound at residue Arg-60. Lys-64 is modified (N6-acetyllysine). Residues Arg-88, Phe-118, and Ser-126–Asn-128 each bind substrate. An N6-acetyllysine modification is found at Lys-151. Residues Lys-182 and Pro-208 to Thr-214 each bind NADP(+). A substrate-binding site is contributed by Arg-219. Ser-287 is modified (phosphoserine). A Microbody targeting signal motif is present at residues Ala-290 to Leu-292. Position 291 is an N6-acetyllysine (Lys-291).

The protein belongs to the short-chain dehydrogenases/reductases (SDR) family. 2,4-dienoyl-CoA reductase subfamily. As to quaternary structure, monomer, dimer and oligomer.

The protein resides in the peroxisome. It carries out the reaction a (2E,4Z)-dienoyl-CoA + NADPH + H(+) = a 4,5-saturated-(3E)-enoyl-CoA + NADP(+). The enzyme catalyses a (2E,4E)-dienoyl-CoA + NADPH + H(+) = a 4,5-saturated-(3E)-enoyl-CoA + NADP(+). The catalysed reaction is (2E,4E)-hexadienoyl-CoA + NADPH + H(+) = (3E)-hexenoyl-CoA + NADP(+). It catalyses the reaction (2E,4E)-decadienoyl-CoA + NADPH + H(+) = (3E)-decenoyl-CoA + NADP(+). It carries out the reaction (2E,4Z,7Z,10Z,13Z,16Z,19Z)-docosaheptaenoyl-CoA + NADPH + H(+) = (3E,7Z,10Z,13Z,16Z,19Z)-docosahexaenoyl-CoA + NADP(+). Functionally, auxiliary enzyme of beta-oxidation. Participates in the degradation of unsaturated fatty enoyl-CoA esters having double bonds in both even- and odd-numbered positions in peroxisome. Catalyzes the NADP-dependent reduction of 2,4-dienoyl-CoA to yield trans-3-enoyl-CoA. Has activity towards short and medium chain 2,4-dienoyl-CoAs, but also towards 2,4,7,10,13,16,19-docosaheptaenoyl-CoA, suggesting that it does not constitute a rate limiting step in the peroxisomal degradation of docosahexaenoic acid. In Mus musculus (Mouse), this protein is Peroxisomal 2,4-dienoyl-CoA reductase [(3E)-enoyl-CoA-producing] (Decr2).